A 370-amino-acid chain; its full sequence is Putative F-box protein At3g10430 (370 aa).

The 47-residue stretch at 1 to 47 folds into the F-box domain; it reads MGSSLPFDLILEILQRTPAESLLRFKSTCKKWYELISNDKRFMYKHL.

The protein is Putative F-box protein At3g10430 of Arabidopsis thaliana (Mouse-ear cress).